The chain runs to 252 residues: Probable transcriptional regulatory protein Kole_1935 (252 aa).

The protein belongs to the TACO1 family.

It is found in the cytoplasm. The chain is Probable transcriptional regulatory protein Kole_1935 from Kosmotoga olearia (strain ATCC BAA-1733 / DSM 21960 / TBF 19.5.1).